We begin with the raw amino-acid sequence, 1046 residues long: Inner tegument protein (1046 aa).

The interaction with large tegument protein stretch occupies residues 543–1046 (WGIVPPDESN…TGRRANGDNA (504 aa)).

The protein belongs to the herpesviridae inner tegument protein family. Interacts (via C-terminus) with the large tegument protein/LTP (via N-terminus).

The protein resides in the virion tegument. It localises to the host cytoplasm. Its subcellular location is the host nucleus. It is found in the host Golgi apparatus. The protein localises to the host trans-Golgi network. Its function is as follows. Plays an essential role in cytoplasmic secondary envelopment during viral egress. Interacts with the capsid via the large tegument protein/LTP and participates in its transport to the host trans-Golgi network (TGN) where secondary envelopment occurs. Modulates tegumentation and capsid accumulation at the viral assembly complex. This Gallid herpesvirus 2 (strain Chicken/Md5/ATCC VR-987) (GaHV-2) protein is Inner tegument protein (MDV050).